The primary structure comprises 262 residues: Small ribosomal subunit protein uS2 (262 aa).

The segment at 224–246 (GNQGEDQDDAQEQQVAADKKADS) is disordered.

Belongs to the universal ribosomal protein uS2 family.

This is Small ribosomal subunit protein uS2 from Lacticaseibacillus casei (strain BL23) (Lactobacillus casei).